The primary structure comprises 235 residues: Large ribosomal subunit protein uL1 (235 aa).

The protein belongs to the universal ribosomal protein uL1 family. Part of the 50S ribosomal subunit.

In terms of biological role, binds directly to 23S rRNA. The L1 stalk is quite mobile in the ribosome, and is involved in E site tRNA release. Its function is as follows. Protein L1 is also a translational repressor protein, it controls the translation of the L11 operon by binding to its mRNA. The chain is Large ribosomal subunit protein uL1 from Rhodospirillum centenum (strain ATCC 51521 / SW).